Consider the following 214-residue polypeptide: Thymidylate kinase (214 aa).

10–17 (GIDGCGKT) is an ATP binding site.

Belongs to the thymidylate kinase family.

It carries out the reaction dTMP + ATP = dTDP + ADP. Its function is as follows. Phosphorylation of dTMP to form dTDP in both de novo and salvage pathways of dTTP synthesis. The chain is Thymidylate kinase from Prochlorococcus marinus subsp. pastoris (strain CCMP1986 / NIES-2087 / MED4).